The sequence spans 142 residues: Large ribosomal subunit protein uL13 (142 aa).

The protein belongs to the universal ribosomal protein uL13 family. In terms of assembly, part of the 50S ribosomal subunit.

Functionally, this protein is one of the early assembly proteins of the 50S ribosomal subunit, although it is not seen to bind rRNA by itself. It is important during the early stages of 50S assembly. In Treponema pallidum (strain Nichols), this protein is Large ribosomal subunit protein uL13.